Here is a 166-residue protein sequence, read N- to C-terminus: UPF0260 protein GbCGDNIH1_2046 (166 aa).

The segment at 147–166 (RFPRPRRPRQEPAGKTADES) is disordered. A compositionally biased stretch (basic and acidic residues) spans 154 to 166 (PRQEPAGKTADES).

The protein belongs to the UPF0260 family.

The polypeptide is UPF0260 protein GbCGDNIH1_2046 (Granulibacter bethesdensis (strain ATCC BAA-1260 / CGDNIH1)).